The primary structure comprises 779 residues: Phosphoribosylformylglycinamidine synthase subunit PurL (779 aa).

His52 is an active-site residue. The ATP site is built by Tyr55 and Lys94. Glu96 is a Mg(2+) binding site. Substrate is bound by residues 97 to 100 (SHNH) and Arg119. Residue His98 is the Proton acceptor of the active site. Position 120 (Asp120) interacts with Mg(2+). Gln243 is a binding site for substrate. Asp271 is a binding site for Mg(2+). 315–317 (ESQ) provides a ligand contact to substrate. ATP is bound by residues Asn523 and Gly560. Asn561 is a Mg(2+) binding site. Ser563 is a binding site for substrate.

This sequence belongs to the FGAMS family. As to quaternary structure, monomer. Part of the FGAM synthase complex composed of 1 PurL, 1 PurQ and 2 PurS subunits.

The protein localises to the cytoplasm. The catalysed reaction is N(2)-formyl-N(1)-(5-phospho-beta-D-ribosyl)glycinamide + L-glutamine + ATP + H2O = 2-formamido-N(1)-(5-O-phospho-beta-D-ribosyl)acetamidine + L-glutamate + ADP + phosphate + H(+). Its pathway is purine metabolism; IMP biosynthesis via de novo pathway; 5-amino-1-(5-phospho-D-ribosyl)imidazole from N(2)-formyl-N(1)-(5-phospho-D-ribosyl)glycinamide: step 1/2. Its function is as follows. Part of the phosphoribosylformylglycinamidine synthase complex involved in the purines biosynthetic pathway. Catalyzes the ATP-dependent conversion of formylglycinamide ribonucleotide (FGAR) and glutamine to yield formylglycinamidine ribonucleotide (FGAM) and glutamate. The FGAM synthase complex is composed of three subunits. PurQ produces an ammonia molecule by converting glutamine to glutamate. PurL transfers the ammonia molecule to FGAR to form FGAM in an ATP-dependent manner. PurS interacts with PurQ and PurL and is thought to assist in the transfer of the ammonia molecule from PurQ to PurL. This chain is Phosphoribosylformylglycinamidine synthase subunit PurL, found in Prochlorococcus marinus subsp. pastoris (strain CCMP1986 / NIES-2087 / MED4).